The following is a 346-amino-acid chain: 4-hydroxy-3-methylbut-2-enyl diphosphate reductase (346 aa).

Cysteine 19 provides a ligand contact to [4Fe-4S] cluster. Positions 48 and 84 each coordinate (2E)-4-hydroxy-3-methylbut-2-enyl diphosphate. Dimethylallyl diphosphate contacts are provided by histidine 48 and histidine 84. Residues histidine 48 and histidine 84 each contribute to the isopentenyl diphosphate site. Cysteine 106 provides a ligand contact to [4Fe-4S] cluster. Histidine 134 is a (2E)-4-hydroxy-3-methylbut-2-enyl diphosphate binding site. Histidine 134 contributes to the dimethylallyl diphosphate binding site. Residue histidine 134 coordinates isopentenyl diphosphate. Glutamate 136 functions as the Proton donor in the catalytic mechanism. Threonine 175 provides a ligand contact to (2E)-4-hydroxy-3-methylbut-2-enyl diphosphate. Cysteine 205 contacts [4Fe-4S] cluster. Serine 233, serine 234, asparagine 235, and serine 278 together coordinate (2E)-4-hydroxy-3-methylbut-2-enyl diphosphate. Residues serine 233, serine 234, asparagine 235, and serine 278 each contribute to the dimethylallyl diphosphate site. Isopentenyl diphosphate-binding residues include serine 233, serine 234, asparagine 235, and serine 278.

This sequence belongs to the IspH family. The cofactor is [4Fe-4S] cluster.

The enzyme catalyses isopentenyl diphosphate + 2 oxidized [2Fe-2S]-[ferredoxin] + H2O = (2E)-4-hydroxy-3-methylbut-2-enyl diphosphate + 2 reduced [2Fe-2S]-[ferredoxin] + 2 H(+). It catalyses the reaction dimethylallyl diphosphate + 2 oxidized [2Fe-2S]-[ferredoxin] + H2O = (2E)-4-hydroxy-3-methylbut-2-enyl diphosphate + 2 reduced [2Fe-2S]-[ferredoxin] + 2 H(+). It participates in isoprenoid biosynthesis; dimethylallyl diphosphate biosynthesis; dimethylallyl diphosphate from (2E)-4-hydroxy-3-methylbutenyl diphosphate: step 1/1. Its pathway is isoprenoid biosynthesis; isopentenyl diphosphate biosynthesis via DXP pathway; isopentenyl diphosphate from 1-deoxy-D-xylulose 5-phosphate: step 6/6. In terms of biological role, catalyzes the conversion of 1-hydroxy-2-methyl-2-(E)-butenyl 4-diphosphate (HMBPP) into a mixture of isopentenyl diphosphate (IPP) and dimethylallyl diphosphate (DMAPP). Acts in the terminal step of the DOXP/MEP pathway for isoprenoid precursor biosynthesis. This is 4-hydroxy-3-methylbut-2-enyl diphosphate reductase from Brucella suis biovar 1 (strain 1330).